Consider the following 520-residue polypeptide: 4-hydroxyphenylacetate 3-monooxygenase oxygenase component (520 aa).

This sequence belongs to the FADH(2)-utilizing monooxygenase family. 4-HPA 3-monooxygenase consists of a reductase component HpaC and an oxygenase component HpaB.

It carries out the reaction 4-hydroxyphenylacetate + FADH2 + O2 = 3,4-dihydroxyphenylacetate + FAD + H2O + H(+). It functions in the pathway aromatic compound metabolism; 4-hydroxyphenylacetate degradation; pyruvate and succinate semialdehyde from 4-hydroxyphenylacetate: step 1/7. Functionally, utilizes FADH(2) supplied by HpaC or by another flavin reductase, to catalyze the hydroxylation of 4-hydroxyphenylacetic acid, leading to the production of 3,4-DHPA. Can also oxidize phenol to catechol, and hydroxylate other phenol derivatives. This chain is 4-hydroxyphenylacetate 3-monooxygenase oxygenase component (hpaB), found in Escherichia coli.